We begin with the raw amino-acid sequence, 446 residues long: Maltoporin (446 aa).

The N-terminal stretch at 1-25 (MMITLRKLPLAVAVAAGVMSAQAMA) is a signal peptide.

This sequence belongs to the porin LamB (TC 1.B.3) family. As to quaternary structure, homotrimer formed of three 18-stranded antiparallel beta-barrels, containing three independent channels.

The protein localises to the cell outer membrane. It catalyses the reaction beta-maltose(in) = beta-maltose(out). Functionally, involved in the transport of maltose and maltodextrins. The protein is Maltoporin of Escherichia coli O6:K15:H31 (strain 536 / UPEC).